Consider the following 142-residue polypeptide: gSG7 salivary protein (142 aa).

A signal peptide spans 1-26; sequence MAVRMTVILPLAMALICLMQAEPATA. Intrachain disulfides connect Cys84-Cys139 and Cys107-Cys117.

Associates with activated host C3-convertase complex C3bBb (C3-CFB). Interacts with host properdin (CFP), a regulator of the alternate pathway of complement. In terms of tissue distribution, female salivary gland (at protein level).

The protein localises to the secreted. Functionally, salivary protein that potently inhibits the alternative pathway of complement system activation in the host while having no inhibitory effect on the classical or lectin pathways. Binds and stabilizes activated host C3-convertase complex C3bBb (C3-CFB) and inhibits its convertase activity. Enhances accumulation of C3bBb on immobilized properdin. The sequence is that of gSG7 salivary protein from Anopheles albimanus (New world malaria mosquito).